The sequence spans 270 residues: Putative pyruvate, phosphate dikinase regulatory protein (270 aa).

Residue 153–160 (GVSRTSKT) participates in ADP binding.

This sequence belongs to the pyruvate, phosphate/water dikinase regulatory protein family. PDRP subfamily.

The catalysed reaction is N(tele)-phospho-L-histidyl/L-threonyl-[pyruvate, phosphate dikinase] + ADP = N(tele)-phospho-L-histidyl/O-phospho-L-threonyl-[pyruvate, phosphate dikinase] + AMP + H(+). The enzyme catalyses N(tele)-phospho-L-histidyl/O-phospho-L-threonyl-[pyruvate, phosphate dikinase] + phosphate + H(+) = N(tele)-phospho-L-histidyl/L-threonyl-[pyruvate, phosphate dikinase] + diphosphate. In terms of biological role, bifunctional serine/threonine kinase and phosphorylase involved in the regulation of the pyruvate, phosphate dikinase (PPDK) by catalyzing its phosphorylation/dephosphorylation. This Halalkalibacterium halodurans (strain ATCC BAA-125 / DSM 18197 / FERM 7344 / JCM 9153 / C-125) (Bacillus halodurans) protein is Putative pyruvate, phosphate dikinase regulatory protein.